The chain runs to 258 residues: Type II restriction enzyme HincII (258 aa).

It carries out the reaction Endonucleolytic cleavage of DNA to give specific double-stranded fragments with terminal 5'-phosphates.. In terms of biological role, a P subtype restriction enzyme that recognizes the double-stranded sequence 5'-GTYRAC-3' and cleaves after Y-3. This Haemophilus influenzae protein is Type II restriction enzyme HincII (hincIIR).